Consider the following 67-residue polypeptide: Large ribosomal subunit protein bL35 (67 aa).

The protein belongs to the bacterial ribosomal protein bL35 family.

This is Large ribosomal subunit protein bL35 from Rhizobium etli (strain ATCC 51251 / DSM 11541 / JCM 21823 / NBRC 15573 / CFN 42).